A 530-amino-acid polypeptide reads, in one-letter code: Chaperone Ric-8A (530 aa).

S435 bears the Phosphoserine mark. Phosphothreonine is present on residues T440 and T442. 4 positions are modified to phosphoserine: S501, S522, S523, and S527.

The protein belongs to the synembryn family. Interacts with GDP-bound G alpha proteins GNAI1, GNAO1 and GNAQ, and with GNA13 with lower affinity. Does not interact with G-alpha proteins when they are in complex with subunits beta and gamma. Interacts (via C-terminus) with RGS14; the interaction stimulates the dissociation of the complex between RGS14 and the active GTP-bound form of GNAI1. Interacts with NCS1; interaction is favored in the absence of Ca(2+) and myristoylation of NCS1 is not required. As to expression, expressed in neurons and neurites of the CA1 and CA2 subregions of the hippocampus (at protein level). In adult brain, it is expressed in the neocortex, hippocampus and cerebellum as well as in the pineal gland and ependymal layer.

The protein resides in the cytoplasm. The protein localises to the cell cortex. Chaperone that specifically binds and folds nascent G alpha proteins prior to G protein heterotrimer formation, promoting their stability and activity: folds GNAI1, GNAO1, GNA13 and GNAQ. Does not fold G(s) G-alpha proteins GNAS nor GNAL. Also acts as a guanine nucleotide exchange factor (GEF) for G alpha proteins by stimulating exchange of bound GDP for free GTP. Involved in regulation of microtubule pulling forces during mitotic movement of chromosomes by stimulating G(i)-alpha protein (GNAI1), possibly leading to release G(i)-alpha-GTP and NuMA proteins from the NuMA-GPSM2-G(i)-alpha-GDP complex. Also acts as an activator for G(q)-alpha (GNAQ) protein by enhancing the G(q)-coupled receptor-mediated ERK activation. The sequence is that of Chaperone Ric-8A from Mus musculus (Mouse).